A 394-amino-acid polypeptide reads, in one-letter code: Elongation factor Tu 1 (394 aa).

Residues 10–204 (KPHVNVGTIG…FLDSYIPEPE (195 aa)) enclose the tr-type G domain. The interval 19–26 (GHVDHGKT) is G1. 19–26 (GHVDHGKT) is a GTP binding site. Thr26 serves as a coordination point for Mg(2+). Residues 60-64 (GITIN) are G2. The tract at residues 81–84 (DCPG) is G3. GTP contacts are provided by residues 81–85 (DCPGH) and 136–139 (NKCD). Positions 136–139 (NKCD) are G4. The segment at 174 to 176 (SAL) is G5.

This sequence belongs to the TRAFAC class translation factor GTPase superfamily. Classic translation factor GTPase family. EF-Tu/EF-1A subfamily. Monomer.

Its subcellular location is the cytoplasm. The catalysed reaction is GTP + H2O = GDP + phosphate + H(+). In terms of biological role, GTP hydrolase that promotes the GTP-dependent binding of aminoacyl-tRNA to the A-site of ribosomes during protein biosynthesis. The chain is Elongation factor Tu 1 from Shigella flexneri serotype 5b (strain 8401).